The chain runs to 335 residues: Probable cytosolic iron-sulfur protein assembly protein Ciao1 (335 aa).

WD repeat units follow at residues 12-51, 57-96, 101-140, 146-185, 192-231, 250-289, and 301-335; these read GHKG…WSTK, GHKR…FECN, GHEN…EFEC, SHTQ…NDWD, SHTS…NSAG, QHSR…KPDE, and AHDQ…KVTE.

This sequence belongs to the WD repeat CIA1 family.

In terms of biological role, essential component of the cytosolic iron-sulfur (Fe/S) protein assembly machinery. Required for the maturation of extramitochondrial Fe/S proteins. The protein is Probable cytosolic iron-sulfur protein assembly protein Ciao1 of Drosophila erecta (Fruit fly).